The chain runs to 159 residues: Cyclic pyranopterin monophosphate synthase (159 aa).

Substrate is bound by residues 75–77 (LCH) and 113–114 (ME). Residue aspartate 128 is part of the active site.

Belongs to the MoaC family. As to quaternary structure, homohexamer; trimer of dimers.

It catalyses the reaction (8S)-3',8-cyclo-7,8-dihydroguanosine 5'-triphosphate = cyclic pyranopterin phosphate + diphosphate. It functions in the pathway cofactor biosynthesis; molybdopterin biosynthesis. Catalyzes the conversion of (8S)-3',8-cyclo-7,8-dihydroguanosine 5'-triphosphate to cyclic pyranopterin monophosphate (cPMP). In Yersinia pseudotuberculosis serotype O:1b (strain IP 31758), this protein is Cyclic pyranopterin monophosphate synthase.